The following is a 232-amino-acid chain: Flagellar L-ring protein (232 aa).

Residues 1–21 (MQKNAAHTYAISSLLVLSLTG) form the signal peptide. Cysteine 22 is lipidated: N-palmitoyl cysteine. Cysteine 22 is lipidated: S-diacylglycerol cysteine.

It belongs to the FlgH family. In terms of assembly, the basal body constitutes a major portion of the flagellar organelle and consists of four rings (L,P,S, and M) mounted on a central rod.

The protein resides in the cell outer membrane. Its subcellular location is the bacterial flagellum basal body. Assembles around the rod to form the L-ring and probably protects the motor/basal body from shearing forces during rotation. The sequence is that of Flagellar L-ring protein from Shigella dysenteriae serotype 1 (strain Sd197).